Reading from the N-terminus, the 1036-residue chain is DNA-directed RNA polymerase subunit beta (1036 aa).

It belongs to the RNA polymerase beta chain family. In plastids the minimal PEP RNA polymerase catalytic core is composed of four subunits: alpha, beta, beta', and beta''. When a (nuclear-encoded) sigma factor is associated with the core the holoenzyme is formed, which can initiate transcription.

Its subcellular location is the plastid. It is found in the chloroplast. It carries out the reaction RNA(n) + a ribonucleoside 5'-triphosphate = RNA(n+1) + diphosphate. Functionally, DNA-dependent RNA polymerase catalyzes the transcription of DNA into RNA using the four ribonucleoside triphosphates as substrates. The polypeptide is DNA-directed RNA polymerase subunit beta (Cyanidioschyzon merolae (strain NIES-3377 / 10D) (Unicellular red alga)).